Reading from the N-terminus, the 328-residue chain is Diacetylchitobiose uptake system permease protein DasB (328 aa).

A disordered region spans residues 1–27; the sequence is MTVQTERPPSGPSDVRKADGGGTGGTR. A run of 6 helical transmembrane segments spans residues 36 to 56, 104 to 124, 134 to 154, 188 to 208, 247 to 267, and 297 to 317; these read ALAP…LLGW, IIFT…IGLL, FVLM…ATTV, FSTF…FVAI, FLYA…VQVY, and MGAA…AYYL. An ABC transmembrane type-1 domain is found at 100-316; it reads TVRSIIFTAV…LILLGLTAYY (217 aa).

Belongs to the binding-protein-dependent transport system permease family. The complex is composed of two ATP-binding proteins (MsiK), two transmembrane proteins (DasB and DasC) and a solute-binding protein (DasA).

It is found in the cell membrane. Its function is as follows. Part of the ABC transporter complex DasABC-MsiK involved in N,N'-diacetylchitobiose ((GlcNAc)2) uptake. Responsible for the translocation of the substrate across the membrane. This is Diacetylchitobiose uptake system permease protein DasB from Streptomyces coelicolor (strain ATCC BAA-471 / A3(2) / M145).